Reading from the N-terminus, the 460-residue chain is GTPase Der (460 aa).

EngA-type G domains are found at residues 3–167 and 189–364; these read FTIA…PEPT and IRVA…AIWN. GTP is bound by residues 9-16, 56-60, 119-122, 195-202, 242-246, and 307-310; these read GRPNVGKS, DTAGL, NKSE, GRPNAGKS, and NKWD. Residues 365–449 enclose the KH-like domain; sequence RRVPTAALNR…PIRITLREKA (85 aa).

Belongs to the TRAFAC class TrmE-Era-EngA-EngB-Septin-like GTPase superfamily. EngA (Der) GTPase family. Associates with the 50S ribosomal subunit.

In terms of biological role, GTPase that plays an essential role in the late steps of ribosome biogenesis. This chain is GTPase Der, found in Nitrobacter hamburgensis (strain DSM 10229 / NCIMB 13809 / X14).